The chain runs to 133 residues: ATP synthase epsilon chain, chloroplastic (133 aa).

The protein belongs to the ATPase epsilon chain family. As to quaternary structure, F-type ATPases have 2 components, CF(1) - the catalytic core - and CF(0) - the membrane proton channel. CF(1) has five subunits: alpha(3), beta(3), gamma(1), delta(1), epsilon(1). CF(0) has three main subunits: a, b and c.

It is found in the plastid. It localises to the chloroplast thylakoid membrane. Functionally, produces ATP from ADP in the presence of a proton gradient across the membrane. The polypeptide is ATP synthase epsilon chain, chloroplastic (Daucus carota (Wild carrot)).